Reading from the N-terminus, the 295-residue chain is uncharacterized protein (295 aa).

2 disordered regions span residues 33-52 (VDAP…DSHS) and 180-295 (LSKA…AELK). Residue S50 is modified to Phosphoserine. Polar residues-rich tracts occupy residues 205–217 (QKNS…SKLI) and 241–251 (TSRASVLSQSP). The span at 267 to 276 (EASEGPEDTP) shows a compositional bias: acidic residues. Residues 277 to 289 (ESSQSPEESVSAS) show a composition bias toward low complexity.

This is an uncharacterized protein from Homo sapiens (Human).